Reading from the N-terminus, the 491-residue chain is Ketol-acid reductoisomerase (NADP(+)) (491 aa).

One can recognise a KARI N-terminal Rossmann domain in the interval 15–208 (AQLGKCRFMG…GGHRAGVLES (194 aa)). Residues 45 to 48 (CGAQ), arginine 68, arginine 76, serine 78, and 108 to 110 (DKQ) each bind NADP(+). The active site involves histidine 132. Glycine 158 provides a ligand contact to NADP(+). KARI C-terminal knotted domains lie at 209-344 (SFVA…TAPQ) and 345-484 (YEGK…MTDM). Positions 217, 221, 389, and 393 each coordinate Mg(2+). A substrate-binding site is contributed by serine 414.

It belongs to the ketol-acid reductoisomerase family. Mg(2+) is required as a cofactor.

The enzyme catalyses (2R)-2,3-dihydroxy-3-methylbutanoate + NADP(+) = (2S)-2-acetolactate + NADPH + H(+). It carries out the reaction (2R,3R)-2,3-dihydroxy-3-methylpentanoate + NADP(+) = (S)-2-ethyl-2-hydroxy-3-oxobutanoate + NADPH + H(+). It functions in the pathway amino-acid biosynthesis; L-isoleucine biosynthesis; L-isoleucine from 2-oxobutanoate: step 2/4. It participates in amino-acid biosynthesis; L-valine biosynthesis; L-valine from pyruvate: step 2/4. Functionally, involved in the biosynthesis of branched-chain amino acids (BCAA). Catalyzes an alkyl-migration followed by a ketol-acid reduction of (S)-2-acetolactate (S2AL) to yield (R)-2,3-dihydroxy-isovalerate. In the isomerase reaction, S2AL is rearranged via a Mg-dependent methyl migration to produce 3-hydroxy-3-methyl-2-ketobutyrate (HMKB). In the reductase reaction, this 2-ketoacid undergoes a metal-dependent reduction by NADPH to yield (R)-2,3-dihydroxy-isovalerate. This Shigella dysenteriae serotype 1 (strain Sd197) protein is Ketol-acid reductoisomerase (NADP(+)).